Here is a 488-residue protein sequence, read N- to C-terminus: Glycogen synthase (488 aa).

Residue Arg-20 participates in ADP-alpha-D-glucose binding.

Belongs to the glycosyltransferase 1 family. Bacterial/plant glycogen synthase subfamily.

It carries out the reaction [(1-&gt;4)-alpha-D-glucosyl](n) + ADP-alpha-D-glucose = [(1-&gt;4)-alpha-D-glucosyl](n+1) + ADP + H(+). It functions in the pathway glycan biosynthesis; glycogen biosynthesis. Synthesizes alpha-1,4-glucan chains using ADP-glucose. The sequence is that of Glycogen synthase from Chlorobaculum parvum (strain DSM 263 / NCIMB 8327) (Chlorobium vibrioforme subsp. thiosulfatophilum).